Reading from the N-terminus, the 435-residue chain is D-aminoacyl-tRNA deacylase (435 aa).

This sequence belongs to the DtdA deacylase family. In terms of assembly, monomer. The cofactor is Zn(2+).

The catalysed reaction is a D-aminoacyl-tRNA + H2O = a tRNA + a D-alpha-amino acid + H(+). It carries out the reaction glycyl-tRNA(Ala) + H2O = tRNA(Ala) + glycine + H(+). In terms of biological role, D-aminoacyl-tRNA deacylase with broad substrate specificity. By recycling D-aminoacyl-tRNA to D-amino acids and free tRNA molecules, this enzyme counteracts the toxicity associated with the formation of D-aminoacyl-tRNA entities in vivo. The protein is D-aminoacyl-tRNA deacylase of Methanosphaerula palustris (strain ATCC BAA-1556 / DSM 19958 / E1-9c).